A 48-amino-acid polypeptide reads, in one-letter code: 4-carboxymuconolactone decarboxylase (48 aa).

This sequence belongs to the carboxymuconolactone decarboxylase family.

The catalysed reaction is (R)-2-(carboxymethyl)-5-oxo-2,5-dihydro-2-furoate + H(+) = (4,5-dihydro-5-oxofuran-2-yl)-acetate + CO2. The protein operates within aromatic compound metabolism; beta-ketoadipate pathway; 5-oxo-4,5-dihydro-2-furylacetate from 3-carboxy-cis,cis-muconate: step 2/2. The sequence is that of 4-carboxymuconolactone decarboxylase from Pseudomonas putida (Arthrobacter siderocapsulatus).